The following is a 221-amino-acid chain: uncharacterized protein (221 aa).

Helical transmembrane passes span Thr-41–Ile-63, Ala-78–Ser-100, Ile-141–Leu-163, and Leu-178–Phe-200.

It localises to the cell membrane. This is an uncharacterized protein from Archaeoglobus fulgidus (strain ATCC 49558 / DSM 4304 / JCM 9628 / NBRC 100126 / VC-16).